A 430-amino-acid polypeptide reads, in one-letter code: Gamma-glutamyl phosphate reductase (430 aa).

The protein belongs to the gamma-glutamyl phosphate reductase family.

It is found in the cytoplasm. The catalysed reaction is L-glutamate 5-semialdehyde + phosphate + NADP(+) = L-glutamyl 5-phosphate + NADPH + H(+). Its pathway is amino-acid biosynthesis; L-proline biosynthesis; L-glutamate 5-semialdehyde from L-glutamate: step 2/2. Catalyzes the NADPH-dependent reduction of L-glutamate 5-phosphate into L-glutamate 5-semialdehyde and phosphate. The product spontaneously undergoes cyclization to form 1-pyrroline-5-carboxylate. This is Gamma-glutamyl phosphate reductase from Rhodopseudomonas palustris (strain HaA2).